Reading from the N-terminus, the 197-residue chain is Peptide deformylase (197 aa).

Fe cation is bound by residues Cys106 and His148. Glu149 is a catalytic residue. Residue His152 coordinates Fe cation.

It belongs to the polypeptide deformylase family. It depends on Fe(2+) as a cofactor.

The enzyme catalyses N-terminal N-formyl-L-methionyl-[peptide] + H2O = N-terminal L-methionyl-[peptide] + formate. In terms of biological role, removes the formyl group from the N-terminal Met of newly synthesized proteins. Requires at least a dipeptide for an efficient rate of reaction. N-terminal L-methionine is a prerequisite for activity but the enzyme has broad specificity at other positions. The polypeptide is Peptide deformylase (Mycolicibacterium gilvum (strain PYR-GCK) (Mycobacterium gilvum (strain PYR-GCK))).